A 306-amino-acid polypeptide reads, in one-letter code: tRNA dimethylallyltransferase (306 aa).

15 to 22 contacts ATP; sequence GPTASGKS. 17–22 provides a ligand contact to substrate; the sequence is TASGKS. Residues 40–43 are interaction with substrate tRNA; that stretch reads DSMQ.

The protein belongs to the IPP transferase family. As to quaternary structure, monomer. Requires Mg(2+) as cofactor.

The catalysed reaction is adenosine(37) in tRNA + dimethylallyl diphosphate = N(6)-dimethylallyladenosine(37) in tRNA + diphosphate. In terms of biological role, catalyzes the transfer of a dimethylallyl group onto the adenine at position 37 in tRNAs that read codons beginning with uridine, leading to the formation of N6-(dimethylallyl)adenosine (i(6)A). This chain is tRNA dimethylallyltransferase, found in Methylobacterium sp. (strain 4-46).